The following is an 87-amino-acid chain: Exodeoxyribonuclease 7 small subunit (87 aa).

It belongs to the XseB family. In terms of assembly, heterooligomer composed of large and small subunits.

The protein resides in the cytoplasm. The enzyme catalyses Exonucleolytic cleavage in either 5'- to 3'- or 3'- to 5'-direction to yield nucleoside 5'-phosphates.. Bidirectionally degrades single-stranded DNA into large acid-insoluble oligonucleotides, which are then degraded further into small acid-soluble oligonucleotides. The polypeptide is Exodeoxyribonuclease 7 small subunit (Halorhodospira halophila (strain DSM 244 / SL1) (Ectothiorhodospira halophila (strain DSM 244 / SL1))).